Reading from the N-terminus, the 348-residue chain is NADH-quinone oxidoreductase subunit H (348 aa).

8 helical membrane passes run 25 to 45 (ILFLVGQALVIFLVVVIVAAL), 95 to 115 (FMFILAPAVAMFTALASFAII), 128 to 148 (IGILFFFAMAGMAVYAVMFGG), 168 to 188 (ISYEVFLGLSLMGVVAMTGSF), 204 to 224 (WNIFPQFLGFLTFVVAGVAVT), 254 to 274 (FFIGEYVNVVLISALMTCLFF), 287 to 307 (ILPPAFWFMIKTLFFMTMFVL), and 327 to 347 (VCLPVTLINLMITAALILISA).

It belongs to the complex I subunit 1 family. As to quaternary structure, NDH-1 is composed of 14 different subunits. Subunits NuoA, H, J, K, L, M, N constitute the membrane sector of the complex.

It is found in the cell inner membrane. It catalyses the reaction a quinone + NADH + 5 H(+)(in) = a quinol + NAD(+) + 4 H(+)(out). Functionally, NDH-1 shuttles electrons from NADH, via FMN and iron-sulfur (Fe-S) centers, to quinones in the respiratory chain. The immediate electron acceptor for the enzyme in this species is believed to be ubiquinone. Couples the redox reaction to proton translocation (for every two electrons transferred, four hydrogen ions are translocated across the cytoplasmic membrane), and thus conserves the redox energy in a proton gradient. This subunit may bind ubiquinone. The polypeptide is NADH-quinone oxidoreductase subunit H (Psychrobacter sp. (strain PRwf-1)).